A 238-amino-acid polypeptide reads, in one-letter code: Urease accessory protein UreG (238 aa).

The segment covering 1–15 (MPPHLIDGEPHDHAH) has biased composition (basic and acidic residues). The tract at residues 1–27 (MPPHLIDGEPHDHAHDRPKRQRTPGEP) is disordered. Position 34–41 (34–41 (GPVGSGKT)) interacts with GTP.

The protein belongs to the SIMIBI class G3E GTPase family. UreG subfamily. Homodimer. UreD, UreF and UreG form a complex that acts as a GTP-hydrolysis-dependent molecular chaperone, activating the urease apoprotein by helping to assemble the nickel containing metallocenter of UreC. The UreE protein probably delivers the nickel.

It is found in the cytoplasm. Facilitates the functional incorporation of the urease nickel metallocenter. This process requires GTP hydrolysis, probably effectuated by UreG. The sequence is that of Urease accessory protein UreG from Nocardia farcinica (strain IFM 10152).